The primary structure comprises 221 residues: Sentrin-specific protease 8 (221 aa).

An N-acetylmethionine modification is found at Met1. Residues 11–174 (SLLRQSDVSL…MYVICNTEAL (164 aa)) are protease. Active-site residues include His102 and Asp119. Residue Cys163 is the Nucleophile of the active site.

Belongs to the peptidase C48 family.

In terms of biological role, protease that catalyzes two essential functions in the NEDD8 pathway: processing of full-length NEDD8 to its mature form and deconjugation of NEDD8 from targeted proteins such as cullins or p53. The sequence is that of Sentrin-specific protease 8 (Senp8) from Mus musculus (Mouse).